The following is a 174-amino-acid chain: Ribosome maturation factor RimM (174 aa).

Positions 99-172 (ADEFFYHDVI…RLVIRPIAGL (74 aa)) constitute a PRC barrel domain.

It belongs to the RimM family. Binds ribosomal protein uS19.

It is found in the cytoplasm. An accessory protein needed during the final step in the assembly of 30S ribosomal subunit, possibly for assembly of the head region. Essential for efficient processing of 16S rRNA. May be needed both before and after RbfA during the maturation of 16S rRNA. It has affinity for free ribosomal 30S subunits but not for 70S ribosomes. This Chloroflexus aurantiacus (strain ATCC 29366 / DSM 635 / J-10-fl) protein is Ribosome maturation factor RimM.